A 136-amino-acid chain; its full sequence is Small ribosomal subunit protein eS6 (136 aa).

It belongs to the eukaryotic ribosomal protein eS6 family.

In Methanosarcina acetivorans (strain ATCC 35395 / DSM 2834 / JCM 12185 / C2A), this protein is Small ribosomal subunit protein eS6.